Here is a 213-residue protein sequence, read N- to C-terminus: Large ribosomal subunit protein bL25 (213 aa).

The span at 191-207 (AEPTDAPTAPAAAPGAE) shows a compositional bias: low complexity. The tract at residues 191-213 (AEPTDAPTAPAAAPGAEAPKDKA) is disordered.

Belongs to the bacterial ribosomal protein bL25 family. CTC subfamily. As to quaternary structure, part of the 50S ribosomal subunit; part of the 5S rRNA/L5/L18/L25 subcomplex. Contacts the 5S rRNA. Binds to the 5S rRNA independently of L5 and L18.

This is one of the proteins that binds to the 5S RNA in the ribosome where it forms part of the central protuberance. In Polynucleobacter asymbioticus (strain DSM 18221 / CIP 109841 / QLW-P1DMWA-1) (Polynucleobacter necessarius subsp. asymbioticus), this protein is Large ribosomal subunit protein bL25.